The following is a 245-amino-acid chain: tRNA (guanine-N(7)-)-methyltransferase (245 aa).

S-adenosyl-L-methionine-binding residues include Glu-75, Glu-100, Asp-127, and Asp-150. Asp-150 is an active-site residue. Substrate-binding positions include Lys-154, Asp-186, and 223–226 (TKFE).

It belongs to the class I-like SAM-binding methyltransferase superfamily. TrmB family.

The enzyme catalyses guanosine(46) in tRNA + S-adenosyl-L-methionine = N(7)-methylguanosine(46) in tRNA + S-adenosyl-L-homocysteine. It participates in tRNA modification; N(7)-methylguanine-tRNA biosynthesis. In terms of biological role, catalyzes the formation of N(7)-methylguanine at position 46 (m7G46) in tRNA. This Photobacterium profundum (strain SS9) protein is tRNA (guanine-N(7)-)-methyltransferase.